We begin with the raw amino-acid sequence, 510 residues long: GPI mannosyltransferase 4 (510 aa).

3 helical membrane-spanning segments follow: residues 7–27, 62–82, and 89–109; these read LILALSLLLRLHLAISPSYIH, FVPLWILYTAPLSVLNFLWKG, and AYWFIRAGHALAYWILGDMAL. Asn-142 carries N-linked (GlcNAc...) asparagine glycosylation. A helical membrane pass occupies residues 179 to 199; the sequence is LGLLIVIGTWNRVTFPLWLIV. N-linked (GlcNAc...) asparagine glycosylation is present at Asn-212. 3 helical membrane passes run 213–233, 268–288, and 339–359; these read ISSLILLIASVALTAFFVIHV, LTHLVSNLPVLLGPLLILLRT, and FTSAIFLLSYVFNIIMGFLMG.

This sequence belongs to the glycosyltransferase 22 family. PIGZ subfamily.

The protein localises to the endoplasmic reticulum membrane. Its pathway is glycolipid biosynthesis; glycosylphosphatidylinositol-anchor biosynthesis. Alpha-1,2-mannosyltransferase involved in glycosylphosphatidylinositol-anchor biosynthesis. Transfers a fourth mannose to trimannosyl-GPIs during GPI precursor assembly. The presence of a fourth mannose in GPI is essential in fungi. This is GPI mannosyltransferase 4 (SMP3) from Yarrowia lipolytica (strain CLIB 122 / E 150) (Yeast).